Consider the following 317-residue polypeptide: ATP synthase gamma chain (317 aa).

Belongs to the ATPase gamma chain family. F-type ATPases have 2 components, CF(1) - the catalytic core - and CF(0) - the membrane proton channel. CF(1) has five subunits: alpha(3), beta(3), gamma(1), delta(1), epsilon(1). CF(0) has three main subunits: a, b and c.

It is found in the cellular thylakoid membrane. Produces ATP from ADP in the presence of a proton gradient across the membrane. The gamma chain is believed to be important in regulating ATPase activity and the flow of protons through the CF(0) complex. The chain is ATP synthase gamma chain from Acaryochloris marina (strain MBIC 11017).